The following is a 131-amino-acid chain: Small ribosomal subunit protein uS8 (131 aa).

Belongs to the universal ribosomal protein uS8 family. Part of the 30S ribosomal subunit. Contacts proteins S5 and S12.

Functionally, one of the primary rRNA binding proteins, it binds directly to 16S rRNA central domain where it helps coordinate assembly of the platform of the 30S subunit. In Nitrosospira multiformis (strain ATCC 25196 / NCIMB 11849 / C 71), this protein is Small ribosomal subunit protein uS8.